A 445-amino-acid polypeptide reads, in one-letter code: Tubulin beta-7 chain (445 aa).

8 residues coordinate GTP: Q11, E69, S138, G142, T143, G144, N204, and N226. E69 lines the Mg(2+) pocket. A disordered region spans residues 421 to 445 (EYQQYQDATAEDEEYEEEEEEEEET). Over residues 429 to 445 (TAEDEEYEEEEEEEEET) the composition is skewed to acidic residues.

Belongs to the tubulin family. In terms of assembly, dimer of alpha and beta chains. A typical microtubule is a hollow water-filled tube with an outer diameter of 25 nm and an inner diameter of 15 nM. Alpha-beta heterodimers associate head-to-tail to form protofilaments running lengthwise along the microtubule wall with the beta-tubulin subunit facing the microtubule plus end conferring a structural polarity. Microtubules usually have 13 protofilaments but different protofilament numbers can be found in some organisms and specialized cells. Mg(2+) serves as cofactor.

The protein localises to the cytoplasm. It is found in the cytoskeleton. Its function is as follows. Tubulin is the major constituent of microtubules, a cylinder consisting of laterally associated linear protofilaments composed of alpha- and beta-tubulin heterodimers. Microtubules grow by the addition of GTP-tubulin dimers to the microtubule end, where a stabilizing cap forms. Below the cap, tubulin dimers are in GDP-bound state, owing to GTPase activity of alpha-tubulin. This Zea mays (Maize) protein is Tubulin beta-7 chain (TUBB7).